A 100-amino-acid polypeptide reads, in one-letter code: Small ribosomal subunit protein uS14c (100 aa).

The protein belongs to the universal ribosomal protein uS14 family. As to quaternary structure, part of the 30S ribosomal subunit.

It is found in the plastid. The protein resides in the chloroplast. Binds 16S rRNA, required for the assembly of 30S particles. The protein is Small ribosomal subunit protein uS14c of Coffea arabica (Arabian coffee).